The following is a 443-amino-acid chain: Threonine/serine transporter TdcC (443 aa).

11 helical membrane passes run 22–42, 44–64, 97–117, 140–160, 163–183, 207–227, 261–281, 311–331, 366–386, 389–409, and 423–443; these read TTWT…FFPI, AGFG…PIAF, GVVI…IYGV, FVAL…KDLM, VMSY…LSLI, ILIT…FSPI, MLMV…LSPA, FAIT…FKSF, ISMI…PNIL, IEAM…MYAI, and DNVF…YKLF.

This sequence belongs to the amino acid/polyamine transporter 2 family. SdaC/TdcC subfamily.

The protein resides in the cell inner membrane. The catalysed reaction is L-threonine(in) + H(+)(in) = L-threonine(out) + H(+)(out). The enzyme catalyses L-serine(in) + H(+)(in) = L-serine(out) + H(+)(out). Involved in the import of threonine and serine into the cell, with the concomitant import of a proton (symport system). The protein is Threonine/serine transporter TdcC of Shigella sonnei (strain Ss046).